The primary structure comprises 170 residues: F1 capsule antigen (170 aa).

The N-terminal stretch at Met1 to Ala21 is a signal peptide. The interval Gly100–Lys150 is contains potential antigenic determinants that may stimulate T-cells.

Its subcellular location is the secreted. It localises to the capsule. In Yersinia pestis, this protein is F1 capsule antigen (caf1).